The primary structure comprises 111 residues: Disintegrin piscivostatin-alpha (111 aa).

The signal sequence occupies residues M1–S20. Residues I21–K44 constitute a propeptide that is removed on maturation. Residues G45–A111 form the Disintegrin domain. Cystine bridges form between C53-C76, C67-C73, C72-C97, and C85-C104. A Cell attachment site motif is present at residues R89 to D91. The propeptide occupies Y110 to A111.

The protein belongs to the disintegrin family. Dimeric disintegrin subfamily. In terms of assembly, heterodimer with piscivostatin-beta; disulfide-linked. As to expression, expressed by the venom gland.

It localises to the secreted. Functionally, inhibits fibrinogen interaction with platelets. Acts by binding to alpha-IIb/beta-3 (ITGA2B/ITGB3) on the platelet surface and inhibits both ADP-induced platelet aggregation and platelet aggregate dissociation in human platelet-rich plasma. This is Disintegrin piscivostatin-alpha from Agkistrodon piscivorus piscivorus (Eastern cottonmouth).